The primary structure comprises 517 residues: Protein disulfide-isomerase A5 (517 aa).

Residues 1 to 21 (MARAWGLLLAIGVILPTWLSS) form the signal peptide. Cystine bridges form between C83/C92, C180/C183, C303/C306, and C424/C427. 3 Thioredoxin domains span residues 132–259 (FLKD…NPQP), 268–382 (PWAD…NPEA), and 376–504 (WMQN…TLRE). The Prevents secretion from ER signature appears at 514-517 (REDL).

It belongs to the protein disulfide isomerase family.

Its subcellular location is the endoplasmic reticulum lumen. The enzyme catalyses Catalyzes the rearrangement of -S-S- bonds in proteins.. The chain is Protein disulfide-isomerase A5 (Pdia5) from Rattus norvegicus (Rat).